The chain runs to 328 residues: tRNA uridine(34) hydroxylase (328 aa).

The 95-residue stretch at 123–217 (SDPETVLIDT…YLEEVPKEKS (95 aa)) folds into the Rhodanese domain. Cysteine 177 (cysteine persulfide intermediate) is an active-site residue. Residues 304–328 (AKKLAQLNKQKKQQAKEAARKKAQQ) are disordered. Over residues 317 to 328 (QAKEAARKKAQQ) the composition is skewed to basic and acidic residues.

The protein belongs to the TrhO family.

The enzyme catalyses uridine(34) in tRNA + AH2 + O2 = 5-hydroxyuridine(34) in tRNA + A + H2O. Catalyzes oxygen-dependent 5-hydroxyuridine (ho5U) modification at position 34 in tRNAs. The protein is tRNA uridine(34) hydroxylase of Francisella tularensis subsp. holarctica (strain LVS).